The primary structure comprises 753 residues: MTILNHTLGFPRVGLRRELKKAQESYWAGNSTREELLTVGRELRARHWDQQKQAGIDLLPVGDFAWYDHVLTTSLLLGNVPPRHQNKDGSVDIDTLFRIGRGRAPTGEPAAAAEMTKWFNTNYHYMVPEFVKGQQFKLTWTQLLEEVDEALALGHNVKPVLLGPVTYLWLGKVKGEQFDRLSLLNDILPVYQQVLAELAKRGIEWVQIDEPALVLELPQAWLDAYKPAYDALQGQVKLLLTTYFEGVTPNLDTITALPVQGLHVDLVHGKDDVVELHKRLPSDWLLSAGLINGRNVWRADLTEKYAQIKDIVGKRDLWVASSCSLLHSPIDLSVETRLDAEVKSWFAFALQKCHELALLRDALNSGDTAALAEWSAPIQARRHSTRVHNPAVEKRLAAITAQDSQRANVYEVRAEAQRARFKLPAWPTTTIGSFPQTTEIRTLRLDFKKGNLDANNYRTGIAEHIKQAIVEQERLGLDVLVHGEAERNDMVEYFGEHLDGFVFTQNGWVQSYGSRCVKPPIVIGDISRPAPITVEWAKYAQSLTDKPVKGMLTGPVTILCWSFPREDVSRETIAKQIALALRDEVADLEAAGIGIIQIDEPALREGLPLRRSDWDAYLQWGVEAFRINAAVAKDDTQIHTHMCYCEFNDIMDSIAALDADVITIETSRSDMELLESFEEFDYPNEIGPGVYDIHSPNVPSVEWIEALLKKAAKRIPAERLWVNPDCGLKTRGWPETRAALANMVQAAQNLRRG.

5-methyltetrahydropteroyltri-L-glutamate contacts are provided by residues 17–20 (RELK) and K117. L-homocysteine is bound by residues 431-433 (IGS) and E484. L-methionine is bound by residues 431 to 433 (IGS) and E484. 5-methyltetrahydropteroyltri-L-glutamate is bound by residues 515–516 (RC) and W561. D599 provides a ligand contact to L-homocysteine. D599 contributes to the L-methionine binding site. E605 is a 5-methyltetrahydropteroyltri-L-glutamate binding site. The Zn(2+) site is built by H641, C643, and E665. H694 (proton donor) is an active-site residue. C726 is a binding site for Zn(2+).

Belongs to the vitamin-B12 independent methionine synthase family. It depends on Zn(2+) as a cofactor.

It catalyses the reaction 5-methyltetrahydropteroyltri-L-glutamate + L-homocysteine = tetrahydropteroyltri-L-glutamate + L-methionine. Its pathway is amino-acid biosynthesis; L-methionine biosynthesis via de novo pathway; L-methionine from L-homocysteine (MetE route): step 1/1. Functionally, catalyzes the transfer of a methyl group from 5-methyltetrahydrofolate to homocysteine resulting in methionine formation. In Escherichia coli O8 (strain IAI1), this protein is 5-methyltetrahydropteroyltriglutamate--homocysteine methyltransferase.